We begin with the raw amino-acid sequence, 213 residues long: Redox-sensing transcriptional repressor Rex (213 aa).

Positions 16 to 55 (VYSRFLERMDRNGIVTVSSGEIAEGVGVSSAQVRKDLAYF) form a DNA-binding region, H-T-H motif. 90–95 (GAGNLG) provides a ligand contact to NAD(+).

Belongs to the transcriptional regulatory Rex family. As to quaternary structure, homodimer.

It is found in the cytoplasm. Modulates transcription in response to changes in cellular NADH/NAD(+) redox state. The protein is Redox-sensing transcriptional repressor Rex of Pelotomaculum thermopropionicum (strain DSM 13744 / JCM 10971 / SI).